The chain runs to 190 residues: Translation initiation factor IF-3 (190 aa).

The protein belongs to the IF-3 family. As to quaternary structure, monomer.

It localises to the cytoplasm. In terms of biological role, IF-3 binds to the 30S ribosomal subunit and shifts the equilibrium between 70S ribosomes and their 50S and 30S subunits in favor of the free subunits, thus enhancing the availability of 30S subunits on which protein synthesis initiation begins. This chain is Translation initiation factor IF-3, found in Prochlorococcus marinus subsp. pastoris (strain CCMP1986 / NIES-2087 / MED4).